Reading from the N-terminus, the 227-residue chain is tRNA (guanine-N(7)-)-methyltransferase (227 aa).

The segment at 1–21 (MPDMTMKSQPDRLYGRQRGHA) is disordered. E54, E79, D114, and D136 together coordinate S-adenosyl-L-methionine. D136 is a catalytic residue. Residues K140, D172, and 206 to 209 (TRYE) contribute to the substrate site.

This sequence belongs to the class I-like SAM-binding methyltransferase superfamily. TrmB family.

It carries out the reaction guanosine(46) in tRNA + S-adenosyl-L-methionine = N(7)-methylguanosine(46) in tRNA + S-adenosyl-L-homocysteine. It functions in the pathway tRNA modification; N(7)-methylguanine-tRNA biosynthesis. In terms of biological role, catalyzes the formation of N(7)-methylguanine at position 46 (m7G46) in tRNA. This chain is tRNA (guanine-N(7)-)-methyltransferase, found in Granulibacter bethesdensis (strain ATCC BAA-1260 / CGDNIH1).